The primary structure comprises 133 residues: Bacteriohemerythrin (133 aa).

Fe cation-binding residues include histidine 19, histidine 56, glutamate 60, histidine 75, histidine 79, histidine 115, and aspartate 120.

The protein belongs to the hemerythrin family. As to quaternary structure, monomer.

Its function is as follows. Oxygen-binding protein. May be involved in a storage mechanism or for delivery to oxygen-requiring enzymes. The oxygen-binding site contains two iron atoms. The polypeptide is Bacteriohemerythrin (Campylobacter jejuni subsp. jejuni serotype O:23/36 (strain 81-176)).